Consider the following 519-residue polypeptide: Acetylcholine receptor subunit beta-like 2 (519 aa).

The N-terminal stretch at 1–18 (MWHWSLLCVFLLVPLANS) is a signal peptide. Topologically, residues 19–244 (TAPISFEANP…ITFKLTMRRK (226 aa)) are extracellular. An N-linked (GlcNAc...) asparagine glycan is attached at asparagine 50. A disulfide bond links cysteine 154 and cysteine 168. Transmembrane regions (helical) follow at residues 245–269 (TLFYTVNLIVPCVALTFLTVLVFYL), 277–295 (VTLCISILVSLTVFFLLLA), and 311–332 (YLLFTMILVSLSVWTTVCVLNI). The Cytoplasmic portion of the chain corresponds to 333 to 462 (HFRSPSTHNM…WKFVSMVLDR (130 aa)). Residues 463 to 481 (FFLWLFTLSCVFGTLAIIC) form a helical membrane-spanning segment.

The protein belongs to the ligand-gated ion channel (TC 1.A.9) family. Acetylcholine receptor (TC 1.A.9.1) subfamily. As to expression, CNS in embryos.

The protein localises to the postsynaptic cell membrane. Its subcellular location is the cell membrane. In terms of biological role, after binding acetylcholine, the AChR responds by an extensive change in conformation that affects all subunits and leads to opening of an ion-conducting channel across the plasma membrane. The chain is Acetylcholine receptor subunit beta-like 2 (nAChRbeta2) from Drosophila melanogaster (Fruit fly).